A 100-amino-acid chain; its full sequence is Large ribosomal subunit protein bL28 (100 aa).

The tract at residues 1–21 is disordered; that stretch reads MSRVCDITGQGKSFGNKVSHS. Residues 10 to 19 are compositionally biased toward polar residues; sequence QGKSFGNKVS.

Belongs to the bacterial ribosomal protein bL28 family.

This chain is Large ribosomal subunit protein bL28, found in Ehrlichia canis (strain Jake).